Consider the following 684-residue polypeptide: Galactocerebrosidase (684 aa).

An N-terminal signal peptide occupies residues Met-1–Ala-42. Substrate-binding residues include Thr-109, Trp-151, and Asn-197. The Proton donor/acceptor role is filled by Glu-198. Catalysis depends on Glu-274, which acts as the Nucleophile. The cysteines at positions 287 and 394 are disulfide-linked. N-linked (GlcNAc...) asparagine glycosylation is found at Asn-300 and Asn-379. Residue Arg-396 participates in substrate binding. N-linked (GlcNAc...) asparagine glycosylation is found at Asn-403, Asn-558, Asn-601, and Asn-645.

The protein belongs to the glycosyl hydrolase 59 family. In terms of tissue distribution, detected in brain and kidney.

The protein localises to the lysosome. It catalyses the reaction a beta-D-galactosyl-(1&lt;-&gt;1')-N-acylsphing-4-enine + H2O = an N-acylsphing-4-enine + D-galactose. The enzyme catalyses a D-galactosylceramide + H2O = an N-acyl-sphingoid base + D-galactose. The catalysed reaction is beta-D-galactosyl-(1&lt;-&gt;1)-sphing-4-enine + H2O = sphing-4-enine + D-galactose. Its function is as follows. Hydrolyzes the galactose ester bonds of glycolipids such as galactosylceramide and galactosylsphingosine. Enzyme with very low activity responsible for the lysosomal catabolism of galactosylceramide, a major lipid in myelin, kidney and epithelial cells of small intestine and colon. This is Galactocerebrosidase from Mus musculus (Mouse).